Here is a 626-residue protein sequence, read N- to C-terminus: Elongation factor 4 (626 aa).

Positions 14–195 (SVIRNFCIIA…QIVMDVPAPH (182 aa)) constitute a tr-type G domain. GTP contacts are provided by residues 26-31 (DHGKST) and 142-145 (NKID). A disordered region spans residues 603 to 626 (LSTGEDSNDRDTKDKIRAAQKTEG). The span at 609–626 (SNDRDTKDKIRAAQKTEG) shows a compositional bias: basic and acidic residues.

Belongs to the TRAFAC class translation factor GTPase superfamily. Classic translation factor GTPase family. LepA subfamily.

The protein localises to the cell membrane. The catalysed reaction is GTP + H2O = GDP + phosphate + H(+). Required for accurate and efficient protein synthesis under certain stress conditions. May act as a fidelity factor of the translation reaction, by catalyzing a one-codon backward translocation of tRNAs on improperly translocated ribosomes. Back-translocation proceeds from a post-translocation (POST) complex to a pre-translocation (PRE) complex, thus giving elongation factor G a second chance to translocate the tRNAs correctly. Binds to ribosomes in a GTP-dependent manner. The sequence is that of Elongation factor 4 from Bifidobacterium longum subsp. infantis (strain ATCC 15697 / DSM 20088 / JCM 1222 / NCTC 11817 / S12).